A 180-amino-acid chain; its full sequence is Inner membrane-spanning protein YciB (180 aa).

The next 5 membrane-spanning stretches (helical) occupy residues 11 to 31, 52 to 72, 76 to 96, 121 to 141, and 149 to 169; these read ILFF…ALII, IIMG…NKVE, WKVT…QYGF, LAWA…SQYC, and FKSF…GIYV.

It belongs to the YciB family.

Its subcellular location is the cell inner membrane. Its function is as follows. Plays a role in cell envelope biogenesis, maintenance of cell envelope integrity and membrane homeostasis. The chain is Inner membrane-spanning protein YciB from Mannheimia succiniciproducens (strain KCTC 0769BP / MBEL55E).